The chain runs to 117 residues: UPF0102 protein FTW_1281 (117 aa).

It belongs to the UPF0102 family.

The sequence is that of UPF0102 protein FTW_1281 from Francisella tularensis subsp. tularensis (strain WY96-3418).